The following is a 111-amino-acid chain: MTFVPTDFLIRTPDDPAYFKDRLASPFSFRGCSKTTSTSSSIYSKKKASTATYFRVDPVPRGSQSSRVCEPKTKLIVYQPGNYQKKVKRQVTDPLSLMDKVKKRIDKTEIL.

The protein localises to the mitochondrion. This is an uncharacterized protein from Arabidopsis thaliana (Mouse-ear cress).